Reading from the N-terminus, the 420-residue chain is Pre-mRNA-splicing factor RBM22 (420 aa).

N-acetylalanine is present on alanine 2. 2 positions are modified to phosphoserine: serine 4 and serine 102. Residues lysine 139 and lysine 149 each participate in a glycyl lysine isopeptide (Lys-Gly) (interchain with G-Cter in SUMO2) cross-link. The C3H1-type zinc-finger motif lies at 159–186; it reads RNRPHICSFWVKGECKRGEECPYRHEKP. Position 212 is an N6-acetyllysine (lysine 212). Residues 232 to 305 enclose the RRM domain; the sequence is TTLYVGGLGD…RRLNVKWGRS (74 aa). Lysine 290 is covalently cross-linked (Glycyl lysine isopeptide (Lys-Gly) (interchain with G-Cter in SUMO2)). Disordered stretches follow at residues 303-343 and 371-420; these read GRSQ…AAEE and IAPP…HSSP. Residues 309–318 are compositionally biased toward basic and acidic residues; the sequence is RGKEKEKDGT.

Belongs to the SLT11 family. As to quaternary structure, component of the pre-catalytic and catalytic spliceosome complexes. Component of the postcatalytic spliceosome P complex. Interacts with PDCD6; the interaction induces translocation of PDCD6 in the cytoplasm. Interacts with PPIL1.

The protein localises to the nucleus. It is found in the cytoplasm. Its function is as follows. Required for pre-mRNA splicing as component of the activated spliceosome. Involved in the first step of pre-mRNA splicing. Binds directly to the internal stem-loop (ISL) domain of the U6 snRNA and to the pre-mRNA intron near the 5' splice site during the activation and catalytic phases of the spliceosome cycle. Involved in both translocations of the nuclear SLU7 to the cytoplasm and the cytosolic calcium-binding protein PDCD6 to the nucleus upon cellular stress responses. In Rattus norvegicus (Rat), this protein is Pre-mRNA-splicing factor RBM22 (Rbm22).